We begin with the raw amino-acid sequence, 148 residues long: Snaclec B9 (148 aa).

The N-terminal stretch at 1-24 (MGRFIFVSFGLLVVFLSLSGTGAA) is a signal peptide. 3 disulfides stabilise this stretch: C27/C38, C55/C144, and C121/C136. The C-type lectin domain occupies 34–145 (YDQHCYKVFD…CRLLGHFVCK (112 aa)). Residues N57 and N60 are each glycosylated (N-linked (GlcNAc...) asparagine).

This sequence belongs to the snaclec family. In terms of assembly, heterodimer; disulfide-linked. Expressed by the venom gland.

It is found in the secreted. Its function is as follows. Interferes with one step of hemostasis (modulation of platelet aggregation, or coagulation cascade, for example). This chain is Snaclec B9, found in Macrovipera lebetinus (Levantine viper).